The primary structure comprises 602 residues: Elongation factor 4 (602 aa).

Residues 7-188 (ENIRNFSIIA…SIIRLVPPPK (182 aa)) form the tr-type G domain. GTP-binding positions include 19 to 24 (DHGKST) and 135 to 138 (NKID).

The protein belongs to the TRAFAC class translation factor GTPase superfamily. Classic translation factor GTPase family. LepA subfamily.

It localises to the cell inner membrane. The enzyme catalyses GTP + H2O = GDP + phosphate + H(+). Its function is as follows. Required for accurate and efficient protein synthesis under certain stress conditions. May act as a fidelity factor of the translation reaction, by catalyzing a one-codon backward translocation of tRNAs on improperly translocated ribosomes. Back-translocation proceeds from a post-translocation (POST) complex to a pre-translocation (PRE) complex, thus giving elongation factor G a second chance to translocate the tRNAs correctly. Binds to ribosomes in a GTP-dependent manner. The protein is Elongation factor 4 of Chlamydia trachomatis serovar D (strain ATCC VR-885 / DSM 19411 / UW-3/Cx).